The primary structure comprises 897 residues: Interference hedgehog (897 aa).

A signal peptide spans 1–26 (MSVTRGHKSTPSLLLLFLSVLTSLLA). The Extracellular segment spans residues 27–702 (AIPVLQANAP…THNETFNMNP (676 aa)). Ig-like C2-type domains lie at 40–147 (PGVR…ATIS), 148–235 (GDKI…RRLE), 244–336 (PSAA…YIQL), and 342–429 (PRIV…LQVN). 3 disulfide bridges follow: Cys-63–Cys-125, Cys-169–Cys-217, and Cys-272–Cys-320. Residues Asn-96 and Asn-99 are each glycosylated (N-linked (GlcNAc...) asparagine). N-linked (GlcNAc...) asparagine glycans are attached at residues Asn-296, Asn-351, Asn-393, and Asn-467. Cys-363 and Cys-411 are oxidised to a cystine. Residues 434–468 (QAGDGMGTGGMGRSSNRNAHNRKQKQMVPPSAPNV) are disordered. Fibronectin type-III domains follow at residues 462–571 (PPSA…LQRG) and 579–674 (VPEL…TQRP). Heparin-binding residues include Arg-498, Lys-504, and Lys-506. N-linked (GlcNAc...) asparagine glycosylation is present at Asn-530. Arg-545 contributes to the heparin binding site. A glycan (N-linked (GlcNAc...) asparagine) is linked at Asn-561. Over residues 666–682 (LKQGRTQRPRSSTTAQP) the composition is skewed to polar residues. The tract at residues 666 to 694 (LKQGRTQRPRSSTTAQPTMHTVDTTTPTH) is disordered. Residues 683–694 (TMHTVDTTTPTH) show a composition bias toward low complexity. Residue Asn-695 is glycosylated (N-linked (GlcNAc...) asparagine). The helical transmembrane segment at 703 to 723 (LLTGTISGGALLILLVISACL) threads the bilayer. The Cytoplasmic portion of the chain corresponds to 724–897 (CLCKRRHSRG…SSGSLNSVGV (174 aa)). Disordered regions lie at residues 773–793 (AQQQQQQLQQQHQQDEKDSQD) and 819–849 (MSSSSLRRSQRTLERAAAGGGSGGNNNNLNQ). Low complexity predominate over residues 774 to 784 (QQQQQQLQQQH).

Belongs to the immunoglobulin superfamily. IHOG family. Homodimer. Heterotetramer; 2 iHog chains bind 2 hh chains when facilitated by heparin, heparin is required to promote high-affinity interactions between hh and iHog.

It localises to the membrane. Functionally, mediates response to the active Hedgehog (Hh) protein signal in embryos, functioning upstream or at the level of patched (ptc). The sequence is that of Interference hedgehog from Drosophila mojavensis (Fruit fly).